Here is a 91-residue protein sequence, read N- to C-terminus: MEARDVLKRPVITEKSSEAMAEDKYTFDVDTRANKTQVKIAVEEIFDVKVANVNIINYKPKKKRMGRYQGYTNKRRKAIVTLKEGSIDLFN.

It belongs to the universal ribosomal protein uL23 family. Part of the 50S ribosomal subunit. Contacts protein L29, and trigger factor when it is bound to the ribosome.

Functionally, one of the early assembly proteins it binds 23S rRNA. One of the proteins that surrounds the polypeptide exit tunnel on the outside of the ribosome. Forms the main docking site for trigger factor binding to the ribosome. The chain is Large ribosomal subunit protein uL23 from Staphylococcus haemolyticus (strain JCSC1435).